The primary structure comprises 298 residues: Bifunctional protein FolD (298 aa).

Residues 166 to 168 (GRS), Ser195, and Ile236 contribute to the NADP(+) site.

This sequence belongs to the tetrahydrofolate dehydrogenase/cyclohydrolase family. As to quaternary structure, homodimer.

It carries out the reaction (6R)-5,10-methylene-5,6,7,8-tetrahydrofolate + NADP(+) = (6R)-5,10-methenyltetrahydrofolate + NADPH. The catalysed reaction is (6R)-5,10-methenyltetrahydrofolate + H2O = (6R)-10-formyltetrahydrofolate + H(+). Its pathway is one-carbon metabolism; tetrahydrofolate interconversion. In terms of biological role, catalyzes the oxidation of 5,10-methylenetetrahydrofolate to 5,10-methenyltetrahydrofolate and then the hydrolysis of 5,10-methenyltetrahydrofolate to 10-formyltetrahydrofolate. The chain is Bifunctional protein FolD from Chlorobium phaeobacteroides (strain BS1).